An 886-amino-acid chain; its full sequence is MSQQGLEALLRPKSIAVIGASMKPHRAGYLMMRNLLAGGFNGPVLPVTPAWKAVLGVMAWPDIASLPFTPDLAILCTNASRNLALLDALGAKGCKTCIILSAPTSQHEELLACARHYKMRLLGPNSLGLLAPWQGLNASFSPVPIKQGKLAFISQSAAVSNTILDWAQQREMGFSYFIALGDSLDIDVDELLDYLARDSKTSAILLYLEQLSDARRFVSAARSASRNKPILVIKSGRSPAAQRLLNTSAGMDPAWDAAIQRAGLLRVQDTHELFSAVETLSHMRPLRGDRLMIISNGAAPAALALDELWSRNGKLATLSEETCLQLRQALPAHIDIANPLDLCDDASSEHYVKTLDILLASQDFDALMVIHSPSAAAPGTESAHALIETIKRHPRGKFVTLLTNWCGEFSSQEARRLFSEAGLPTYRTPEGTITAFMHMVEYRRNQKQLRETPALPSNLTSNTAEAHNLLQRAIAEGAASLDTHEVQPILHAYGLHTLPTWIASDSAEAVHIAEQIGYPVALKLRSPDIPHKSEVQGVMLYLRTASEVQQAANAIFDRVKMAWPQARIHGLLVQSMANRAGAQELRVVVEHDPVFGPLIMLGEGGVEWRPEEQAVVALPPLNMNLARYLVIQGIKQRKIRARSALRPLDIVGLSQLLVQVSNLIVDCPEIQRLDIHPLLASASEFTALDVTLDIAPFDGDNESRLAVRPYPHQLEEWVEMKNGDRCLFRPILPEDEPQLRQFIAQVTKEDLYYRYFSEINEFTHEDLANMTQIDYDREMAFVAVRRMDNAEEILGVTRAISDPDNVDAEFAVLVRSDLKGLGLGRRLMEKLIAYTRDHGLKRLNGITMPNNRGMVALARKLGFQVDIQLEEGIVGLTLNLAKCDES.

In terms of domain architecture, ATP-grasp spans 487–523 (QPILHAYGLHTLPTWIASDSAEAVHIAEQIGYPVALK). 513-524 (AEQIGYPVALKL) contacts ATP. The N-acetyltransferase domain occupies 726–881 (CLFRPILPED…GIVGLTLNLA (156 aa)).

It in the N-terminal section; belongs to the acetate CoA ligase alpha subunit family. The protein in the central section; belongs to the acetate CoA ligase beta subunit family. As to quaternary structure, monomer in the absence of acetyl-CoA. Oligomerizes to a tetrameric form in the presence of acetyl-CoA.

It carries out the reaction L-lysyl-[protein] + acetyl-CoA = N(6)-acetyl-L-lysyl-[protein] + CoA + H(+). Exhibits positive cooperativity. It may be the result of acetyl-CoA binding to two distinct sites, or the result of subunit interactions. Its function is as follows. Acetylates and inactivates the acetyl-CoA synthase (Acs). Can also acetylate other central metabolic enzymes in response to environmental changes. The sequence is that of Peptidyl-lysine N-acetyltransferase Pat (pat) from Salmonella typhimurium (strain LT2 / SGSC1412 / ATCC 700720).